Reading from the N-terminus, the 577-residue chain is Adenine deaminase (577 aa).

This sequence belongs to the metallo-dependent hydrolases superfamily. Adenine deaminase family. The cofactor is Mn(2+).

The enzyme catalyses adenine + H2O + H(+) = hypoxanthine + NH4(+). In Kosmotoga olearia (strain ATCC BAA-1733 / DSM 21960 / TBF 19.5.1), this protein is Adenine deaminase.